The chain runs to 20 residues: Styelin-A (20 aa).

Hemocytes and pharyngeal tissues.

It localises to the secreted. Functionally, bactericidal against several Gram-positive and Gram-negative bacteria. The chain is Styelin-A from Styela clava (Sea squirt).